Here is a 1000-residue protein sequence, read N- to C-terminus: Vacuolar protein-sorting protein bro1 (1000 aa).

The 402-residue stretch at proline 5 to methionine 406 folds into the BRO1 domain. A coiled-coil region spans residues tyrosine 732 to glutamate 793. Disordered regions lie at residues leucine 760–glutamine 857 and proline 891–lysine 1000. A compositionally biased stretch (basic and acidic residues) spans isoleucine 764 to threonine 792. The span at valine 840–serine 849 shows a compositional bias: polar residues. Composition is skewed to pro residues over residues serine 898–proline 922 and tyrosine 931–serine 954. Over residues threonine 981–aspartate 991 the composition is skewed to polar residues.

This sequence belongs to the BRO1 family.

The protein localises to the cytoplasm. The protein resides in the endosome. In terms of biological role, involved in concentration and sorting of cargo proteins of the multivesicular body (MVB) for incorporation into intralumenal vesicles. This chain is Vacuolar protein-sorting protein bro1 (broA), found in Emericella nidulans (strain FGSC A4 / ATCC 38163 / CBS 112.46 / NRRL 194 / M139) (Aspergillus nidulans).